We begin with the raw amino-acid sequence, 270 residues long: Putative pyruvate, phosphate dikinase regulatory protein (270 aa).

148–155 (GISRTSKT) is an ADP binding site.

Belongs to the pyruvate, phosphate/water dikinase regulatory protein family. PDRP subfamily.

It catalyses the reaction N(tele)-phospho-L-histidyl/L-threonyl-[pyruvate, phosphate dikinase] + ADP = N(tele)-phospho-L-histidyl/O-phospho-L-threonyl-[pyruvate, phosphate dikinase] + AMP + H(+). It carries out the reaction N(tele)-phospho-L-histidyl/O-phospho-L-threonyl-[pyruvate, phosphate dikinase] + phosphate + H(+) = N(tele)-phospho-L-histidyl/L-threonyl-[pyruvate, phosphate dikinase] + diphosphate. In terms of biological role, bifunctional serine/threonine kinase and phosphorylase involved in the regulation of the pyruvate, phosphate dikinase (PPDK) by catalyzing its phosphorylation/dephosphorylation. This chain is Putative pyruvate, phosphate dikinase regulatory protein, found in Bacillus cereus (strain AH187).